The chain runs to 196 residues: Deoxyribose-phosphate aldolase (196 aa).

The Proton donor/acceptor role is filled by D91. K153 functions as the Schiff-base intermediate with acetaldehyde in the catalytic mechanism. The active-site Proton donor/acceptor is K182.

The protein belongs to the DeoC/FbaB aldolase family. DeoC type 1 subfamily.

It is found in the cytoplasm. The enzyme catalyses 2-deoxy-D-ribose 5-phosphate = D-glyceraldehyde 3-phosphate + acetaldehyde. It functions in the pathway carbohydrate degradation; 2-deoxy-D-ribose 1-phosphate degradation; D-glyceraldehyde 3-phosphate and acetaldehyde from 2-deoxy-alpha-D-ribose 1-phosphate: step 2/2. In terms of biological role, catalyzes a reversible aldol reaction between acetaldehyde and D-glyceraldehyde 3-phosphate to generate 2-deoxy-D-ribose 5-phosphate. The chain is Deoxyribose-phosphate aldolase from Mycoplasma mycoides subsp. mycoides SC (strain CCUG 32753 / NCTC 10114 / PG1).